Reading from the N-terminus, the 213-residue chain is Cytokinin riboside 5'-monophosphate phosphoribohydrolase LOG2 (213 aa).

Residues E79, 97–98 (RK), 114–120 (GYGTFEE), and T126 each bind substrate.

This sequence belongs to the LOG family. Expressed in roots and shoots. Detected in root hairs.

It localises to the cytoplasm. The protein localises to the nucleus. It catalyses the reaction N(6)-(dimethylallyl)adenosine 5'-phosphate + H2O = N(6)-dimethylallyladenine + D-ribose 5-phosphate. The catalysed reaction is 9-ribosyl-trans-zeatin 5'-phosphate + H2O = trans-zeatin + D-ribose 5-phosphate. Functionally, cytokinin-activating enzyme working in the direct activation pathway. Phosphoribohydrolase that converts inactive cytokinin nucleotides to the biologically active free-base forms. This is Cytokinin riboside 5'-monophosphate phosphoribohydrolase LOG2 (LOG2) from Arabidopsis thaliana (Mouse-ear cress).